We begin with the raw amino-acid sequence, 453 residues long: DNA repair protein RadA (453 aa).

A C4-type zinc finger spans residues 10–27 (CQECGYQSPKYLGRCPNC). 95–102 (GDPGIGKS) is a binding site for ATP. A RadA KNRFG motif motif is present at residues 251 to 255 (KNRFG). Residues 350–453 (DAYLKSAGGV…VGQVLNAVFS (104 aa)) are lon-protease-like.

This sequence belongs to the RecA family. RadA subfamily.

Its function is as follows. DNA-dependent ATPase involved in processing of recombination intermediates, plays a role in repairing DNA breaks. Stimulates the branch migration of RecA-mediated strand transfer reactions, allowing the 3' invading strand to extend heteroduplex DNA faster. Binds ssDNA in the presence of ADP but not other nucleotides, has ATPase activity that is stimulated by ssDNA and various branched DNA structures, but inhibited by SSB. Does not have RecA's homology-searching function. This is DNA repair protein RadA from Streptococcus pyogenes serotype M1.